Consider the following 208-residue polypeptide: Interleukin-6 (208 aa).

The N-terminal stretch at 1–27 (MTFLSTSAFSPLAFSLGLLLVVATAFP) is a signal peptide. Residues cysteine 68 and cysteine 74 are joined by a disulfide bond. Serine 77 carries the phosphoserine modification. Cysteine 97 and cysteine 107 are joined by a disulfide.

This sequence belongs to the IL-6 superfamily. Component of a hexamer of two molecules each of IL6, IL6R and IL6ST; first binds to IL6R to associate with the signaling subunit IL6ST. Interacts with IL6R (via the N-terminal ectodomain); this interaction may be affected by IL6R-binding with SORL1, hence decreasing IL6 cis signaling. Interacts with SORL1 (via the N-terminal ectodomain); this interaction leads to IL6 internalization and lysosomal degradation. May form a trimeric complex with the soluble SORL1 ectodomain and soluble IL6R receptor; this interaction might stabilize circulating IL6, hence promoting IL6 trans signaling.

It localises to the secreted. Cytokine with a wide variety of biological functions in immunity, tissue regeneration, and metabolism. Binds to IL6R, then the complex associates to the signaling subunit IL6ST/gp130 to trigger the intracellular IL6-signaling pathway. The interaction with the membrane-bound IL6R and IL6ST stimulates 'classic signaling', whereas the binding of IL6 and soluble IL6R to IL6ST stimulates 'trans-signaling'. Alternatively, 'cluster signaling' occurs when membrane-bound IL6:IL6R complexes on transmitter cells activate IL6ST receptors on neighboring receiver cells. Functionally, IL6 is a potent inducer of the acute phase response. Rapid production of IL6 contributes to host defense during infection and tissue injury, but excessive IL6 synthesis is involved in disease pathology. In the innate immune response, is synthesized by myeloid cells, such as macrophages and dendritic cells, upon recognition of pathogens through toll-like receptors (TLRs) at the site of infection or tissue injury. In the adaptive immune response, is required for the differentiation of B cells into immunoglobulin-secreting cells. Plays a major role in the differentiation of CD4(+) T cell subsets. Essential factor for the development of T follicular helper (Tfh) cells that are required for the induction of germinal-center formation. Required to drive naive CD4(+) T cells to the Th17 lineage. Also required for proliferation of myeloma cells and the survival of plasmablast cells. In terms of biological role, acts as an essential factor in bone homeostasis and on vessels directly or indirectly by induction of VEGF, resulting in increased angiogenesis activity and vascular permeability. Induces, through 'trans-signaling' and synergistically with IL1B and TNF, the production of VEGF. Involved in metabolic controls, is discharged into the bloodstream after muscle contraction increasing lipolysis and improving insulin resistance. 'Trans-signaling' in central nervous system also regulates energy and glucose homeostasis. Mediates, through GLP-1, crosstalk between insulin-sensitive tissues, intestinal L cells and pancreatic islets to adapt to changes in insulin demand. Also acts as a myokine. Plays a protective role during liver injury, being required for maintenance of tissue regeneration. Also has a pivotal role in iron metabolism by regulating HAMP/hepcidin expression upon inflammation or bacterial infection. Through activation of IL6ST-YAP-NOTCH pathway, induces inflammation-induced epithelial regeneration. In Felis catus (Cat), this protein is Interleukin-6 (IL6).